We begin with the raw amino-acid sequence, 41 residues long: Photosystem I reaction center subunit IX (41 aa).

The chain crosses the membrane as a helical span at residues 7-27; that stretch reads YLSTAPVVAAAWFTFTAGLLI.

This sequence belongs to the PsaJ family.

It is found in the plastid. The protein localises to the chloroplast thylakoid membrane. May help in the organization of the PsaE and PsaF subunits. The sequence is that of Photosystem I reaction center subunit IX from Oltmannsiellopsis viridis (Marine flagellate).